The primary structure comprises 165 residues: Anaerobic nitrite reductase GLB1 (165 aa).

The 151-residue stretch at Val-12–Lys-162 folds into the Globin domain. The Homodimerization motif lies at Glu-45–Ser-49. Residues Ser-55, Lys-69, His-73, Arg-103, Thr-107, and His-108 each coordinate heme b. The Homodimerization motif lies at Asp-115–Glu-127.

It belongs to the plant globin family. As to quaternary structure, homodimer. The cofactor is heme b. In terms of tissue distribution, in embryonic organs and at low levels in vegetative organs.

It is found in the cytoplasm. The protein localises to the nucleus. The catalysed reaction is Fe(III)-heme b-[protein] + nitric oxide + H2O = Fe(II)-heme b-[protein] + nitrite + 2 H(+). Phytoglobin that reduces nitrite to nitric oxide (NO) under anoxic conditions (e.g. during flooding or in waterlogged soil). May not function as an oxygen storage or transport protein. Has an unusually high affinity for O(2) through an hexacoordinate heme iron because of a very low dissociation constant. This chain is Anaerobic nitrite reductase GLB1 (HB), found in Zea mays (Maize).